The primary structure comprises 347 residues: NADH-ubiquinone oxidoreductase chain 2 (347 aa).

9 consecutive transmembrane segments (helical) span residues 3–23 (PMTF…VMMS), 59–79 (YFLT…INLL), 89–109 (LINP…LGLA), 150–170 (NLNI…WGGL), 178–198 (IMAY…MYNP), 201–221 (MLLN…LLMI), 237–257 (LPLI…LPPL), 276–296 (IILS…YTRI), and 326–346 (LPLM…TAIL).

The protein belongs to the complex I subunit 2 family. In terms of assembly, core subunit of respiratory chain NADH dehydrogenase (Complex I) which is composed of 45 different subunits. Interacts with TMEM242.

The protein localises to the mitochondrion inner membrane. It catalyses the reaction a ubiquinone + NADH + 5 H(+)(in) = a ubiquinol + NAD(+) + 4 H(+)(out). Its function is as follows. Core subunit of the mitochondrial membrane respiratory chain NADH dehydrogenase (Complex I) which catalyzes electron transfer from NADH through the respiratory chain, using ubiquinone as an electron acceptor. Essential for the catalytic activity and assembly of complex I. The chain is NADH-ubiquinone oxidoreductase chain 2 from Nyctophilus arnhemensis (Northern long-eared bat).